Reading from the N-terminus, the 446-residue chain is D(1A) dopamine receptor (446 aa).

Topologically, residues 1–23 (MRTLNTSAMDGTGLVVERDFSVR) are extracellular. Residue Asn-5 is glycosylated (N-linked (GlcNAc...) asparagine). Residues 24 to 49 (ILTACFLSLLILSTLLGNTLVCAAVI) form a helical membrane-spanning segment. The Cytoplasmic portion of the chain corresponds to 50 to 60 (RFRHLRSKVTN). The chain crosses the membrane as a helical span at residues 61–87 (FFVISLAVSDLLVAVLVMPWKAVAEIA). Topologically, residues 88–96 (GFWPFGSFC) are extracellular. Cysteines 96 and 186 form a disulfide. A helical transmembrane segment spans residues 97-119 (NIWVAFDIMCSTASILNLCVISV). Residues 120–138 (DRYWAISSPFRYERKMTPK) lie on the Cytoplasmic side of the membrane. A helical transmembrane segment spans residues 139 to 163 (AAFILISVAWTLSVLISFIPVQLSW). Residues 164–192 (HKAKPTSPSDGNATSLAETIDNCDSSLSR) lie on the Extracellular side of the membrane. Asn-175 carries an N-linked (GlcNAc...) asparagine glycan. The helical transmembrane segment at 193 to 218 (TYAISSSVISFYIPVAIMIVTYTRIY) threads the bilayer. Over 219–272 (RIAQKQIRRIAALERAAVHAKNCQTTTGNGKPVECSQPESSFKMSFKRETKVLK) the chain is Cytoplasmic. Residues 273–299 (TLSVIMGVFVCCWLPFFILNCILPFCG) traverse the membrane as a helical segment. Over 300–312 (SGETQPFCIDSIT) the chain is Extracellular. Residues 313 to 337 (FDVFVWFGWANSSLNPIIYAFNADF) form a helical membrane-spanning segment. Over 338–446 (RKAFSTLLGC…PITQNGQHPT (109 aa)) the chain is Cytoplasmic. Residues Cys-347 and Cys-351 are each lipidated (S-palmitoyl cysteine).

It belongs to the G-protein coupled receptor 1 family. In terms of assembly, interacts with DNAJC14 via its C-terminus. Interacts with DRD2. Interacts with DORIP1.

It is found in the cell membrane. It localises to the endoplasmic reticulum membrane. Its subcellular location is the cell projection. The protein localises to the cilium membrane. The protein resides in the dendrite. It is found in the dendritic spine. Dopamine receptor whose activity is mediated by G proteins which activate adenylyl cyclase. The sequence is that of D(1A) dopamine receptor (DRD1) from Macaca mulatta (Rhesus macaque).